Reading from the N-terminus, the 431-residue chain is Zeaxanthin glucosyltransferase (431 aa).

It belongs to the UDP-glycosyltransferase family.

It carries out the reaction all-trans-zeaxanthin + 2 UDP-alpha-D-glucose = zeaxanthin bis(beta-D-glucoside) + 2 UDP + 2 H(+). Its pathway is carotenoid biosynthesis; zeaxanthin diglucoside biosynthesis. Functionally, catalyzes the glycosylation reaction which converts zeaxanthin to zeaxanthin bis(beta-D-glucoside). The reaction proceeds in two steps with the monoglucoside as an intermediate. The polypeptide is Zeaxanthin glucosyltransferase (crtX) (Pantoea ananas (Erwinia uredovora)).